The sequence spans 526 residues: Berberine bridge enzyme-like 11 (526 aa).

Positions 1–21 (MEKLLIICMLLISVLVATSQS) are cleaved as a signal peptide. Cys-31 and Cys-94 are disulfide-bonded. Asn-52, Asn-136, Asn-273, and Asn-482 each carry an N-linked (GlcNAc...) asparagine glycan. The FAD-binding PCMH-type domain occupies 72-247 (TTPKPIAIIT…MGYKIRLVPV (176 aa)). The segment at residues 109–171 (HDFEGLSYTS…NVLGFPAGLC (63 aa)) is a cross-link (6-(S-cysteinyl)-8alpha-(pros-histidyl)-FAD (His-Cys)).

It belongs to the oxygen-dependent FAD-linked oxidoreductase family. It depends on FAD as a cofactor. The FAD cofactor is bound via a bicovalent 6-S-cysteinyl, 8alpha-N1-histidyl FAD linkage.

It localises to the secreted. The protein resides in the cell wall. The protein is Berberine bridge enzyme-like 11 of Arabidopsis thaliana (Mouse-ear cress).